Consider the following 2059-residue polypeptide: Desmoplakin-A (2059 aa).

The segment covering 1–11 (MSLSGSQTRLH) has biased composition (polar residues). Positions 1-25 (MSLSGSQTRLHQISRRSSSRPDLTA) are disordered. Coiled coils occupy residues 320–354 (IPQK…LLKN) and 397–453 (FKEA…VQTL). Positions 665–690 (EVSSGKTATGVSSGKTATGVSSGKTS) are disordered. A compositionally biased stretch (low complexity) spans 671 to 690 (TATGVSSGKTATGVSSGKTS). Coiled coils occupy residues 1062-1229 (MEEL…AELE) and 1261-1383 (LQQD…LQQR). Plectin repeat units lie at residues 1450–1488 (YLGG…TLEL), 1489–1526 (LEAQ…KDKL), 1564–1602 (LLEA…NEIL), 1666–1694 (IVDP…FLEL), 1847–1885 (LLEA…SVKL), and 1923–1961 (FLEF…AQKL). The tract at residues 2008 to 2059 (KGISSPYNVSSGPSSRSGSRAGSRTGSRSGSRRGSVDYSSSSVSYTFFSSAS) is disordered. Residues 2011–2059 (SSPYNVSSGPSSRSGSRAGSRTGSRSGSRRGSVDYSSSSVSYTFFSSAS) are compositionally biased toward low complexity.

The protein belongs to the plakin or cytolinker family.

The protein resides in the cell junction. Its subcellular location is the desmosome. The protein localises to the cell membrane. Functionally, involved in the organization of desmosome cell-cell junctions. Of particular importance in cell adhesion in the skin and during cardiac development. May also play a role in the regulation of Wnt, TGF-beta and Hippo signaling pathways. This Danio rerio (Zebrafish) protein is Desmoplakin-A.